Consider the following 88-residue polypeptide: Acyl-CoA-binding protein homolog (88 aa).

Residues 3-88 (PQADFDKAAG…AHELIEKYGL (86 aa)) enclose the ACB domain. Residues lysine 15, 30 to 34 (YGLYK), lysine 52, lysine 56, and tyrosine 75 contribute to the an acyl-CoA site.

Belongs to the ACBP family. Brain. Is selectively expressed in glial cells.

The protein resides in the endoplasmic reticulum. Its subcellular location is the golgi apparatus. Its function is as follows. May play important functions in the control of brain and pituitary activities. May regulate GABA neurotransmission through a paracrine and/or autocrine mechanism. May not bind acyl-CoA esters. This is Acyl-CoA-binding protein homolog from Pelophylax ridibundus (Marsh frog).